The sequence spans 157 residues: uncharacterized protein (157 aa).

This is an uncharacterized protein from Lepidoptera (butterflies and moths).